We begin with the raw amino-acid sequence, 419 residues long: Structure-specific endonuclease subunit slx4 (419 aa).

The protein belongs to the SLX4 family. In terms of assembly, forms a heterodimer with slx1. Post-translationally, phosphorylated in response to DNA damage.

Its subcellular location is the nucleus. The protein resides in the nucleolus. Its function is as follows. Regulatory subunit of the slx1-slx4 structure-specific endonuclease that resolves DNA secondary structures generated during DNA repair and recombination. Has endonuclease activity towards branched DNA substrates, introducing single-strand cuts in duplex DNA close to junctions with ss-DNA. Has a preference for stem-loop (SL) and splayed arm Y structures. Introduces a single-strand cut in duplex DNA on the 3' side of a double-strand/single-strand junction with respect to the single-strand moving 3' to 5' away from the junction. Plays a critical role in maintaining the integrity of the ribosomal DNA (rDNA) loci, where it has a role in re-starting stalled replication forks. The complex initiates homologous recombination (HR) events, used to maintain rDNA copy number, in the rDNA repeats that are processed by a mechanism that requires rad22, but not rhp51. Has Holliday junction resolvase activity in vitro. Slx4 is required for efficient processing of DNA substrates. The protein is Structure-specific endonuclease subunit slx4 of Schizosaccharomyces pombe (strain 972 / ATCC 24843) (Fission yeast).